The sequence spans 741 residues: NUT family member 2G (741 aa).

5 disordered regions span residues 172-200 (PGNA…PDDS), 293-375 (IQKS…PEEI), 391-424 (LGSH…SDPG), 496-624 (RAAP…LPGM), and 638-741 (RLSQ…HCSQ). Residues 304-321 (SLPPPAPPRLEPRGPPAP) are compositionally biased toward pro residues. Residues 402–412 (EGQREKGKVEQ) show a composition bias toward basic and acidic residues. Positions 528–545 (QRVSVETSPPQTAAQDPQ) are enriched in polar residues. The span at 639–650 (LSQSPVPSSGLL) shows a compositional bias: low complexity. The span at 731 to 741 (SRRKKKRHCSQ) shows a compositional bias: basic residues.

This sequence belongs to the NUT family.

The chain is NUT family member 2G (NUTM2G) from Homo sapiens (Human).